Reading from the N-terminus, the 310-residue chain is N-acetyl-gamma-glutamyl-phosphate reductase (310 aa).

C117 is an active-site residue.

It belongs to the NAGSA dehydrogenase family. Type 2 subfamily.

It is found in the cytoplasm. It catalyses the reaction N-acetyl-L-glutamate 5-semialdehyde + phosphate + NADP(+) = N-acetyl-L-glutamyl 5-phosphate + NADPH + H(+). It participates in amino-acid biosynthesis; L-arginine biosynthesis; N(2)-acetyl-L-ornithine from L-glutamate: step 3/4. In terms of biological role, catalyzes the NADPH-dependent reduction of N-acetyl-5-glutamyl phosphate to yield N-acetyl-L-glutamate 5-semialdehyde. In Brucella ovis (strain ATCC 25840 / 63/290 / NCTC 10512), this protein is N-acetyl-gamma-glutamyl-phosphate reductase.